Reading from the N-terminus, the 938-residue chain is Bifunctional uridylyltransferase/uridylyl-removing enzyme (938 aa).

The interval 1-379 (MPPRLRPTHL…PGRAQKRKPL (379 aa)) is uridylyltransferase. Positions 380-733 (DEPGFHEVGG…GRIRSELNAA (354 aa)) are uridylyl-removing. Residues 495–617 (VDEHTLRAVG…VQSPERLRLL (123 aa)) form the HD domain. 2 ACT domains span residues 734–813 (EVVV…PVAR) and 845–924 (VVEA…TAQA).

The protein belongs to the GlnD family. Requires Mg(2+) as cofactor.

The catalysed reaction is [protein-PII]-L-tyrosine + UTP = [protein-PII]-uridylyl-L-tyrosine + diphosphate. It catalyses the reaction [protein-PII]-uridylyl-L-tyrosine + H2O = [protein-PII]-L-tyrosine + UMP + H(+). Its activity is regulated as follows. Uridylyltransferase (UTase) activity is inhibited by glutamine, while glutamine activates uridylyl-removing (UR) activity. In terms of biological role, modifies, by uridylylation and deuridylylation, the PII regulatory proteins (GlnB and homologs), in response to the nitrogen status of the cell that GlnD senses through the glutamine level. Under low glutamine levels, catalyzes the conversion of the PII proteins and UTP to PII-UMP and PPi, while under higher glutamine levels, GlnD hydrolyzes PII-UMP to PII and UMP (deuridylylation). Thus, controls uridylylation state and activity of the PII proteins, and plays an important role in the regulation of nitrogen assimilation and metabolism. This is Bifunctional uridylyltransferase/uridylyl-removing enzyme from Phenylobacterium zucineum (strain HLK1).